The following is a 62-amino-acid chain: MVAYPEISWTRNGCTVSKYPEISWTRNGCTVSKYPEISWTRNGCTVSKYPEISWTRNGCTVA.

The propeptide occupies 1–3; it reads MVA. The S-farnesyl cysteine moiety is linked to residue cysteine 14. A propeptide spanning residues 15–18 is cleaved from the precursor; that stretch reads TVSK. The S-farnesyl cysteine moiety is linked to residue cysteine 29. A propeptide spanning residues 30–33 is cleaved from the precursor; sequence TVSK. The S-farnesyl cysteine moiety is linked to residue cysteine 44. Residues 45 to 48 constitute a propeptide that is removed on maturation; sequence TVSK. Cysteine 59 is lipidated: S-farnesyl cysteine. The propeptide occupies 60-62; the sequence is TVA.

The protein localises to the cell membrane. In terms of biological role, rhodotorucin-A is a mating pheromone in cells of mating type A of Rhodosporidium toruloides. The sequence is that of Rhodotorucin-A peptides type 1 (RHA1) from Rhodotorula toruloides (Yeast).